The sequence spans 153 residues: Ribosomal RNA large subunit methyltransferase H (153 aa).

S-adenosyl-L-methionine is bound by residues L63, G102, and 121-126; that span reads FGKITL.

This sequence belongs to the RNA methyltransferase RlmH family. Homodimer.

Its subcellular location is the cytoplasm. It carries out the reaction pseudouridine(1915) in 23S rRNA + S-adenosyl-L-methionine = N(3)-methylpseudouridine(1915) in 23S rRNA + S-adenosyl-L-homocysteine + H(+). Functionally, specifically methylates the pseudouridine at position 1915 (m3Psi1915) in 23S rRNA. The chain is Ribosomal RNA large subunit methyltransferase H from Sulfurovum sp. (strain NBC37-1).